Consider the following 354-residue polypeptide: GRAM domain-containing protein 2A (354 aa).

The span at Met1–Val29 shows a compositional bias: polar residues. Residues Met1–Leu46 form a disordered region. The span at Cys31–Glu40 shows a compositional bias: basic and acidic residues. Residues Gln72–Lys139 form the GRAM domain. A helical membrane pass occupies residues Leu312–Phe332.

The protein resides in the endoplasmic reticulum membrane. It is found in the cell membrane. Functionally, participates in the organization of endoplasmic reticulum-plasma membrane contact sites (EPCS) with pleiotropic functions including STIM1 recruitment and calcium homeostasis. Constitutive tether that co-localize with ESYT2/3 tethers at endoplasmic reticulum-plasma membrane contact sites in a phosphatidylinositol lipid-dependent manner. Pre-marks the subset of phosphtidylinositol 4,5-biphosphate (PI(4,5)P2)-enriched EPCS destined for the store operated calcium entry pathway (SOCE). In Homo sapiens (Human), this protein is GRAM domain-containing protein 2A.